The sequence spans 287 residues: Ribosomal RNA small subunit methyltransferase I (287 aa).

It belongs to the methyltransferase superfamily. RsmI family.

The protein localises to the cytoplasm. The catalysed reaction is cytidine(1402) in 16S rRNA + S-adenosyl-L-methionine = 2'-O-methylcytidine(1402) in 16S rRNA + S-adenosyl-L-homocysteine + H(+). Catalyzes the 2'-O-methylation of the ribose of cytidine 1402 (C1402) in 16S rRNA. This chain is Ribosomal RNA small subunit methyltransferase I, found in Streptococcus pyogenes serotype M6 (strain ATCC BAA-946 / MGAS10394).